A 562-amino-acid chain; its full sequence is Urocanate hydratase (562 aa).

NAD(+) is bound by residues 52–53 (GG), Gln130, 176–178 (GMG), Glu196, Arg201, 242–243 (NA), 263–267 (QTSAH), 273–274 (YL), and Tyr322. Residue Cys410 is part of the active site. Gly492 serves as a coordination point for NAD(+).

The protein belongs to the urocanase family. Requires NAD(+) as cofactor.

It localises to the cytoplasm. It catalyses the reaction 4-imidazolone-5-propanoate = trans-urocanate + H2O. It participates in amino-acid degradation; L-histidine degradation into L-glutamate; N-formimidoyl-L-glutamate from L-histidine: step 2/3. Functionally, catalyzes the conversion of urocanate to 4-imidazolone-5-propionate. This Klebsiella pneumoniae (strain 342) protein is Urocanate hydratase.